A 450-amino-acid chain; its full sequence is Glucose-6-phosphate isomerase (450 aa).

Thr-39 carries the phosphothreonine modification. Glu-291 (proton donor) is an active-site residue. Catalysis depends on residues His-312 and Lys-426.

It belongs to the GPI family.

It localises to the cytoplasm. The catalysed reaction is alpha-D-glucose 6-phosphate = beta-D-fructose 6-phosphate. It participates in carbohydrate biosynthesis; gluconeogenesis. The protein operates within carbohydrate degradation; glycolysis; D-glyceraldehyde 3-phosphate and glycerone phosphate from D-glucose: step 2/4. In terms of biological role, catalyzes the reversible isomerization of glucose-6-phosphate to fructose-6-phosphate. This is Glucose-6-phosphate isomerase from Bacillus cereus (strain ATCC 10987 / NRS 248).